Here is a 511-residue protein sequence, read N- to C-terminus: 2-isopropylmalate synthase (511 aa).

A Pyruvate carboxyltransferase domain is found at 5–267; it reads IQIFDTTLRD…ESQINLEETK (263 aa). 4 residues coordinate Mn(2+): aspartate 14, histidine 202, histidine 204, and asparagine 238. Positions 391–511 are regulatory domain; that stretch reads QLDNLQLQYV…EYELKEGIRT (121 aa).

Belongs to the alpha-IPM synthase/homocitrate synthase family. LeuA type 1 subfamily. As to quaternary structure, homodimer. Mn(2+) serves as cofactor.

The protein resides in the cytoplasm. It carries out the reaction 3-methyl-2-oxobutanoate + acetyl-CoA + H2O = (2S)-2-isopropylmalate + CoA + H(+). It functions in the pathway amino-acid biosynthesis; L-leucine biosynthesis; L-leucine from 3-methyl-2-oxobutanoate: step 1/4. Catalyzes the condensation of the acetyl group of acetyl-CoA with 3-methyl-2-oxobutanoate (2-ketoisovalerate) to form 3-carboxy-3-hydroxy-4-methylpentanoate (2-isopropylmalate). The protein is 2-isopropylmalate synthase of Staphylococcus epidermidis (strain ATCC 35984 / DSM 28319 / BCRC 17069 / CCUG 31568 / BM 3577 / RP62A).